A 636-amino-acid chain; its full sequence is Chaperone protein DnaK (636 aa).

The tract at residues 579 to 636 (ELYKNAAPPPGADGQQGADGQQGADGQQGADGQQGADGQQGADGQTTESSSNDETKTN) is disordered. A compositionally biased stretch (low complexity) spans 590-623 (ADGQQGADGQQGADGQQGADGQQGADGQQGADGQ).

Belongs to the heat shock protein 70 family.

Its function is as follows. Acts as a chaperone. The sequence is that of Chaperone protein DnaK from Nitrosopumilus maritimus (strain SCM1).